The chain runs to 417 residues: Serine hydroxymethyltransferase (417 aa).

(6S)-5,6,7,8-tetrahydrofolate-binding positions include Leu-121 and 125–127; that span reads GHL. Lys-229 is subject to N6-(pyridoxal phosphate)lysine. 355 to 357 contacts (6S)-5,6,7,8-tetrahydrofolate; that stretch reads SSF.

Belongs to the SHMT family. In terms of assembly, homodimer. Pyridoxal 5'-phosphate serves as cofactor.

The protein localises to the cytoplasm. The enzyme catalyses (6R)-5,10-methylene-5,6,7,8-tetrahydrofolate + glycine + H2O = (6S)-5,6,7,8-tetrahydrofolate + L-serine. It participates in one-carbon metabolism; tetrahydrofolate interconversion. The protein operates within amino-acid biosynthesis; glycine biosynthesis; glycine from L-serine: step 1/1. Catalyzes the reversible interconversion of serine and glycine with tetrahydrofolate (THF) serving as the one-carbon carrier. This reaction serves as the major source of one-carbon groups required for the biosynthesis of purines, thymidylate, methionine, and other important biomolecules. Also exhibits THF-independent aldolase activity toward beta-hydroxyamino acids, producing glycine and aldehydes, via a retro-aldol mechanism. This Baumannia cicadellinicola subsp. Homalodisca coagulata protein is Serine hydroxymethyltransferase.